Consider the following 369-residue polypeptide: Aminomethyltransferase (369 aa).

This sequence belongs to the GcvT family. The glycine cleavage system is composed of four proteins: P, T, L and H.

The catalysed reaction is N(6)-[(R)-S(8)-aminomethyldihydrolipoyl]-L-lysyl-[protein] + (6S)-5,6,7,8-tetrahydrofolate = N(6)-[(R)-dihydrolipoyl]-L-lysyl-[protein] + (6R)-5,10-methylene-5,6,7,8-tetrahydrofolate + NH4(+). Its function is as follows. The glycine cleavage system catalyzes the degradation of glycine. The chain is Aminomethyltransferase from Synechococcus sp. (strain CC9311).